Here is a 628-residue protein sequence, read N- to C-terminus: MVAFSALSGVSALSLLLCLVQHAHGVSLKVSTQGGNSSSPILYGFMFEDINHSGDGGIYGQLLQNPGLQGTTPNLTAWAAVGDATIAIDGDSPLTSAIPSTIKLDVADDATGAVGLTNEGYWGIPVDGSEFQSSFWIKGDYSGDITVRLVGNYTGTEYGSATITHTSTADNFTQASVKFPTTKAPDGNVLYELTVDGSVAAGSSLNFGYLTLFGETYKSRENGLKPQLANVLADMKGSFLRFPGGNNLEGNSAENRWKWNETIGDLWDRPGREGTWTYYNTDGLGLHEYFYWCEDLGLVPVLGVWDGFALESGGNTPITGDALTPYIDDVLNELEYILGDTSTTYGAWRAANGQEEPWNLTMVEIGNEDMLGGGCESYAERFTAFYDAIHAAYPDLILIASTSEADCLPESMPEGSWVDYHDYSTPDGLVGQFNYFDNLYRSVPYFIGEYSRWEIDWPNMKGSVSEAVFMIGFERNSDVVKMAAYAPLLQLVNSTQWTPDLIGYTQSPDDIFLSTSYYVQEMFSRNRGDTIKEVTSDSDFGPLYWVASSAGDSYYVKLANYGSETQDLTVSIPGTSTGKLTVLADNDPDAYNSDTQTLVTPSESTVQASNGTFTFSLPAWAVAVLAAN.

A signal peptide spans 1-25; that stretch reads MVAFSALSGVSALSLLLCLVQHAHG. N36, N51, N74, N152, N171, N260, N359, and N493 each carry an N-linked (GlcNAc...) asparagine glycan.

This sequence belongs to the glycosyl hydrolase 51 family.

Its subcellular location is the secreted. The catalysed reaction is Hydrolysis of terminal non-reducing alpha-L-arabinofuranoside residues in alpha-L-arabinosides.. Its pathway is glycan metabolism; L-arabinan degradation. Functionally, alpha-L-arabinofuranosidase involved in the degradation of arabinoxylan, a major component of plant hemicellulose. Acts only on small linear 1,5-alpha-linked L-arabinofuranosyl oligosaccharides. The protein is Probable alpha-L-arabinofuranosidase A (abfA) of Aspergillus awamori (Black koji mold).